The chain runs to 460 residues: Nuclear distribution protein PAC1-1 (460 aa).

The 33-residue stretch at 9–41 (QADELHRALIAYLTAANLPNTAAALREELNLGE) folds into the LisH domain. Residues 74-96 (LVTQIMDLESRNHILQSELDNAT) are a coiled coil. Residues 90-100 (SELDNATPTSR) show a composition bias toward polar residues. The interval 90–115 (SELDNATPTSRQNKDPVAWLPRAPPR) is disordered. 8 WD repeats span residues 120 to 161 (SHRD…RTIK), 163 to 203 (HTKA…KNIR), 207 to 247 (GHDH…CVKT), 250 to 289 (GHAEWVRDVCPSFDGKYILSTSDDYTSRLWDVTVTNPEPR), 294 to 354 (GHEH…KTLA), 355 to 394 (GHDNWVRGLVFHPGGKYLLSVSDDKTLRCWDLTQEGKCVK), 399 to 439 (AHGH…VTPD), and 441 to 460 (QIRCVIATGSVDLNVRIFAN).

This sequence belongs to the WD repeat LIS1/nudF family. As to quaternary structure, self-associates. Interacts with NDL1 and dynein.

The protein resides in the cytoplasm. The protein localises to the cytoskeleton. It is found in the spindle pole. In terms of biological role, positively regulates the activity of the minus-end directed microtubule motor protein dynein. May enhance dynein-mediated microtubule sliding by targeting dynein to the microtubule plus end. Required for nuclear migration during vegetative growth as well as development. Required for retrograde early endosome (EE) transport from the hyphal tip. Required for localization of dynein to the mitotic spindle poles. Recruits additional proteins to the dynein complex at SPBs. The protein is Nuclear distribution protein PAC1-1 of Sordaria macrospora (strain ATCC MYA-333 / DSM 997 / K(L3346) / K-hell).